A 289-amino-acid polypeptide reads, in one-letter code: uncharacterized protein (289 aa).

The next 9 helical transmembrane spans lie at 13–32, 37–59, 80–99, 104–121, 141–160, 165–183, 203–225, 235–252, and 265–287; these read INFA…LSGS, LIIS…HLND, IVTE…IFFI, EIAL…WLYS, VFTY…TIFS, VGVV…GFFL, VLSP…FVVI, TSSL…FAIY, and IISS…AIGC.

It is found in the cell membrane. This is an uncharacterized protein from Archaeoglobus fulgidus (strain ATCC 49558 / DSM 4304 / JCM 9628 / NBRC 100126 / VC-16).